The following is a 519-amino-acid chain: MTEQDAAIVVKPGTVSLDDLARVLAGQPVVLDPSFWPRVEAAAAIVAKAAQADTPVYGINTGFGKLASKRIPPDQTALLQRNLIVSHCCGVGPATPEPIVRLMMALKIISLGRGASGVRREVIEQLQGMLARRVCPLVPQQGSVGASGDLAPLAHMTAVMIGEGQAIVDGKTVSGGEALAAAGLAPLTLGPKEGLALINGTQFSTAYAISGVLRGFHLARAALVTGALSVDAAMASTAPFRPEIQALRGHAGQIAAAATLTALLDGSDIRLSHLEGDERVQDPYCLRCQPQVAGAALDLITQTARALIVEANAVTDNPLVLVETGEIVSGGNFHAEPVAFAADTIALALSEIGAISERRIATLVDPALNFGLPPFLTPDPGVNSGFMIAEVTAAALYAENKQRAAACSIDSTPTSANQEDHVSMAAHAARRLADMADNLAAILGIELLVAAQGITLRAPHATSAPLVAVIAALREQVPALGADRYMAGDLAKAAALVEADALPAAAIGVLPSDPFPRLA.

Positions 146–148 (ASG) form a cross-link, 5-imidazolinone (Ala-Gly). Residue Ser-147 is modified to 2,3-didehydroalanine (Ser).

Belongs to the PAL/histidase family. Post-translationally, contains an active site 4-methylidene-imidazol-5-one (MIO), which is formed autocatalytically by cyclization and dehydration of residues Ala-Ser-Gly.

The protein localises to the cytoplasm. The catalysed reaction is L-histidine = trans-urocanate + NH4(+). It participates in amino-acid degradation; L-histidine degradation into L-glutamate; N-formimidoyl-L-glutamate from L-histidine: step 1/3. In Bradyrhizobium diazoefficiens (strain JCM 10833 / BCRC 13528 / IAM 13628 / NBRC 14792 / USDA 110), this protein is Histidine ammonia-lyase.